The primary structure comprises 156 residues: Cyanate hydratase (156 aa).

Active-site residues include Arg96, Glu99, and Ser122.

It belongs to the cyanase family.

It catalyses the reaction cyanate + hydrogencarbonate + 3 H(+) = NH4(+) + 2 CO2. Catalyzes the reaction of cyanate with bicarbonate to produce ammonia and carbon dioxide. The chain is Cyanate hydratase from Pseudomonas aeruginosa (strain LESB58).